Here is a 388-residue protein sequence, read N- to C-terminus: Beta-hexosaminidase LpqI (388 aa).

The N-terminal stretch at 1–19 (MAFPRTLAILAAAAALVVA) is a signal peptide. Residue Cys20 is the site of N-palmitoyl cysteine attachment. Cys20 is lipidated: S-diacylglycerol cysteine. Substrate-binding positions include Asp123, Arg131, Arg193, and 223–224 (KH). His236 serves as the catalytic Proton donor/acceptor. The active-site Nucleophile is Asp311.

It belongs to the glycosyl hydrolase 3 family.

It is found in the cell inner membrane. It catalyses the reaction Hydrolysis of terminal non-reducing N-acetyl-D-hexosamine residues in N-acetyl-beta-D-hexosaminides.. The protein operates within cell wall biogenesis; peptidoglycan recycling. In terms of biological role, plays a role in peptidoglycan recycling by cleaving the terminal beta-1,4-linked N-acetylglucosamine (GlcNAc) from peptidoglycan fragments. Acts as a regulator for GlcNAc-MurNAc levels by cleaving disaccharides and allowing the breakdown of MurNAc. This chain is Beta-hexosaminidase LpqI, found in Mycobacterium bovis (strain BCG / Pasteur 1173P2).